The chain runs to 264 residues: ATP synthase subunit a (264 aa).

Helical transmembrane passes span 29-49 (TWHIDSLFFSVGLGVLFLWIF), 87-107 (NALIAPLALTIFVWVFMMNFM), 134-154 (DVNITFSLAIGVFVLIIYYSI), 177-197 (IPVNLLLETVTLVAKPISLAL), 208-228 (LIFILIALMYGTNLLLSSLGV), and 235-255 (LIFHILVITLQAFIFMMLTIV).

The protein belongs to the ATPase A chain family. F-type ATPases have 2 components, CF(1) - the catalytic core - and CF(0) - the membrane proton channel. CF(1) has five subunits: alpha(3), beta(3), gamma(1), delta(1), epsilon(1). CF(0) has three main subunits: a(1), b(2) and c(9-12). The alpha and beta chains form an alternating ring which encloses part of the gamma chain. CF(1) is attached to CF(0) by a central stalk formed by the gamma and epsilon chains, while a peripheral stalk is formed by the delta and b chains.

Its subcellular location is the cell inner membrane. Functionally, key component of the proton channel; it plays a direct role in the translocation of protons across the membrane. The protein is ATP synthase subunit a of Shewanella sp. (strain ANA-3).